A 518-amino-acid chain; its full sequence is D-aminopeptidase (518 aa).

Residue Ser-62 is the Nucleophile of the active site. The active-site Proton donor/acceptor is the Lys-65. The interval 477 to 487 (QRSMDAPSPGE) is important for specificity. Asp-481 contacts substrate.

The protein belongs to the peptidase S12 family. In terms of assembly, homodimer.

It catalyses the reaction Release of an N-terminal D-amino acid from a peptide, Xaa-|-Yaa-, in which Xaa is preferably D-Ala, D-Ser or D-Thr. D-amino acid amides and methyl esters also are hydrolyzed, as is glycine amide.. With respect to regulation, inhibited by beta-lactam compounds such as 6-aminopenicillic acid, 7-aminocephalosporanic acid, benzylpenicillin and ampicillin. Inhibited by p-chloromercuribenzoate. Hydrolyzes N-terminal residues in D-amino acid-containing peptides. This is D-aminopeptidase from Brucella abortus (strain S19).